The following is a 64-amino-acid chain: Mitotic-spindle organizing protein 1 (64 aa).

The protein belongs to the MOZART1 family. As to quaternary structure, part of the gamma-tubulin complex. Interacts directly with alp6/GPC3.

The protein resides in the cytoplasm. Its subcellular location is the cytoskeleton. It is found in the microtubule organizing center. It localises to the spindle pole body. In terms of biological role, required for gamma-tubulin complex recruitment to the microtubule organizing center (MTOC). The chain is Mitotic-spindle organizing protein 1 (mzt1) from Schizosaccharomyces pombe (strain 972 / ATCC 24843) (Fission yeast).